A 261-amino-acid chain; its full sequence is MSYTPGVGGDPAQLAQRISSNIQKITQCSVEIQRTLNQLGTPQDSPELRQQLQQKQQYTNQLAKETDKYIKEFGSLPTTPSEQRQRKIQKDRLVAEFTTSLTNFQKVQRQAAEREKEFVARVRASSRVSGSFPEDSSKERNLVSWESQTQPQVQVQDEEITEDDLRLIHERESSIRQLEADIMDINEIFKDLGMMIHEQGDVIDSIEANVENAEVHVQQANQQLSRAADYQRKSRKTLCIIILILVIGVAIISLIIWGLNH.

Serine 2 carries the N-acetylserine modification. The Cytoplasmic segment spans residues serine 2–leucine 238. Threonine 4 carries the post-translational modification Phosphothreonine. Residue serine 45 is modified to Phosphoserine. Residues glutamate 47 to tyrosine 69 are a coiled coil. The residue at position 75 (serine 75) is a Phosphoserine. Threonine 79 is modified (phosphothreonine). Phosphoserine is present on residues serine 125, serine 126, serine 129, and serine 205. A disordered region spans residues serine 129–glutamine 148. Positions leucine 165–alanine 227 constitute a t-SNARE coiled-coil homology domain. The helical; Anchor for type IV membrane protein transmembrane segment at cysteine 239 to leucine 259 threads the bilayer. At asparagine 260–histidine 261 the chain is on the vesicular side.

Belongs to the syntaxin family. In terms of assembly, forms a SNARE complex with VTI1B, STX8 and VAMP8 which functions in the homotypic fusion of late endosomes. Component of the SNARE complex composed of STX7, STX8, VAMP7 and VTI1B that is required for heterotypic fusion of late endosomes with lysosomes. Interacts with VPS11, VPS16 and VPS18. Interacts with VPS33A. Interacts with TPC1. In terms of tissue distribution, highest expression is found in placenta followed by heart, skeletal muscle, kidney and brain. Low expression is found in pancreas, lung and liver.

The protein localises to the early endosome membrane. Functionally, may be involved in protein trafficking from the plasma membrane to the early endosome (EE) as well as in homotypic fusion of endocytic organelles. Mediates the endocytic trafficking from early endosomes to late endosomes and lysosomes. The protein is Syntaxin-7 (STX7) of Homo sapiens (Human).